Consider the following 320-residue polypeptide: o-succinylbenzoate synthase (320 aa).

Lys-133 serves as the catalytic Proton donor. Mg(2+) contacts are provided by Asp-161, Glu-190, and Asp-213. Lys-235 serves as the catalytic Proton acceptor.

This sequence belongs to the mandelate racemase/muconate lactonizing enzyme family. MenC type 1 subfamily. It depends on a divalent metal cation as a cofactor.

It carries out the reaction (1R,6R)-6-hydroxy-2-succinyl-cyclohexa-2,4-diene-1-carboxylate = 2-succinylbenzoate + H2O. It functions in the pathway quinol/quinone metabolism; 1,4-dihydroxy-2-naphthoate biosynthesis; 1,4-dihydroxy-2-naphthoate from chorismate: step 4/7. It participates in quinol/quinone metabolism; menaquinone biosynthesis. Functionally, converts 2-succinyl-6-hydroxy-2,4-cyclohexadiene-1-carboxylate (SHCHC) to 2-succinylbenzoate (OSB). The polypeptide is o-succinylbenzoate synthase (Escherichia coli O17:K52:H18 (strain UMN026 / ExPEC)).